Consider the following 158-residue polypeptide: Ribosome maturation factor RimP (158 aa).

Belongs to the RimP family.

The protein resides in the cytoplasm. Its function is as follows. Required for maturation of 30S ribosomal subunits. In Lactiplantibacillus plantarum (strain ATCC BAA-793 / NCIMB 8826 / WCFS1) (Lactobacillus plantarum), this protein is Ribosome maturation factor RimP.